We begin with the raw amino-acid sequence, 430 residues long: Adenylosuccinate synthetase (430 aa).

GTP contacts are provided by residues 13 to 19 (GDEGKGK) and 41 to 43 (GHT). Residue D14 is the Proton acceptor of the active site. 2 residues coordinate Mg(2+): D14 and G41. IMP-binding positions include 14 to 17 (DEGK), 39 to 42 (NAGH), T130, R144, Q225, T240, and R304. The Proton donor role is filled by H42. 300 to 306 (ASTGRPR) is a binding site for substrate. GTP is bound by residues R306, 332 to 334 (KLD), and 414 to 416 (STG).

The protein belongs to the adenylosuccinate synthetase family. As to quaternary structure, homodimer. Mg(2+) serves as cofactor.

The protein localises to the cytoplasm. It catalyses the reaction IMP + L-aspartate + GTP = N(6)-(1,2-dicarboxyethyl)-AMP + GDP + phosphate + 2 H(+). It functions in the pathway purine metabolism; AMP biosynthesis via de novo pathway; AMP from IMP: step 1/2. Functionally, plays an important role in the de novo pathway of purine nucleotide biosynthesis. Catalyzes the first committed step in the biosynthesis of AMP from IMP. This chain is Adenylosuccinate synthetase, found in Xanthomonas oryzae pv. oryzae (strain MAFF 311018).